Consider the following 424-residue polypeptide: Translation initiation factor 2 subunit gamma (424 aa).

A tr-type G domain is found at 23 to 220 (LPEVNIGLVG…AIEETIPTPE (198 aa)). Residues 32-39 (GHVDHGKT) form a G1 region. Asp35, Thr39, Gly60, and Ser62 together coordinate Mg(2+). 35–40 (DHGKTT) contributes to the GTP binding site. A G2 region spans residues 60–64 (GISIK). A G3 region spans residues 107-110 (DSPG). Residues 163-166 (NKID) and 198-200 (SAQ) each bind GTP. Residues 163–166 (NKID) form a G4 region. Residues 198–200 (SAQ) form a G5 region.

Belongs to the TRAFAC class translation factor GTPase superfamily. Classic translation factor GTPase family. EIF2G subfamily. As to quaternary structure, heterotrimer composed of an alpha, a beta and a gamma chain. Mg(2+) serves as cofactor.

The enzyme catalyses GTP + H2O = GDP + phosphate + H(+). Functionally, eIF-2 functions in the early steps of protein synthesis by forming a ternary complex with GTP and initiator tRNA. This Archaeoglobus fulgidus (strain ATCC 49558 / DSM 4304 / JCM 9628 / NBRC 100126 / VC-16) protein is Translation initiation factor 2 subunit gamma.